The following is a 340-amino-acid chain: Probable serine acetyltransferase 5 (340 aa).

Composition is skewed to low complexity over residues 1–17 and 54–64; these read MLVV…RVAA and PAEVVPAFAPP. The segment at 1 to 67 is disordered; sequence MLVVVARKSS…VPAFAPPESE (67 aa).

Belongs to the transferase hexapeptide repeat family. In terms of assembly, homomultimer.

The catalysed reaction is L-serine + acetyl-CoA = O-acetyl-L-serine + CoA. Its pathway is amino-acid biosynthesis; L-cysteine biosynthesis; L-cysteine from L-serine: step 1/2. In Oryza sativa subsp. japonica (Rice), this protein is Probable serine acetyltransferase 5 (SAT5).